Here is a 174-residue protein sequence, read N- to C-terminus: ATP synthase subunit delta, sodium ion specific (174 aa).

This sequence belongs to the ATPase delta chain family. F-type ATPases have 2 components, F(1) - the catalytic core - and F(0) - the membrane proton channel. F(1) has five subunits: alpha(3), beta(3), gamma(1), delta(1), epsilon(1). F(0) has three main subunits: a(1), b(2) and c(10-14). The alpha and beta chains form an alternating ring which encloses part of the gamma chain. F(1) is attached to F(0) by a central stalk formed by the gamma and epsilon chains, while a peripheral stalk is formed by the delta and b chains.

The protein localises to the cell inner membrane. Functionally, f(1)F(0) ATP synthase produces ATP from ADP in the presence of a proton or sodium gradient. F-type ATPases consist of two structural domains, F(1) containing the extramembraneous catalytic core and F(0) containing the membrane proton channel, linked together by a central stalk and a peripheral stalk. During catalysis, ATP synthesis in the catalytic domain of F(1) is coupled via a rotary mechanism of the central stalk subunits to proton translocation. In terms of biological role, this protein is part of the stalk that links CF(0) to CF(1). It either transmits conformational changes from CF(0) to CF(1) or is implicated in proton conduction. This is ATP synthase subunit delta, sodium ion specific from Propionigenium modestum.